We begin with the raw amino-acid sequence, 492 residues long: Cytochrome P450 monooxygenase ATEG_03631 (492 aa).

The helical transmembrane segment at Phe10–Leu30 threads the bilayer. Residue Asn309 is glycosylated (N-linked (GlcNAc...) asparagine). Cys457 contributes to the heme binding site.

This sequence belongs to the cytochrome P450 family. Heme is required as a cofactor.

Its subcellular location is the membrane. The protein operates within secondary metabolite biosynthesis. Cytochrome P450 monooxygenase; part of the cluster A that mediates the biosynthesis of azasperpyranones, members of the azaphilone family that exhibit anti-cancer activities. Azasperpyranones are synthesized by 2 clusters, A and B. Cluster A is responsible for the production of the polyhydric phenol moiety while the azaphilonoid scaffold is produced by the cluster B. The non-reducing polyketide synthase ATEG_03629 produces 5-methyl orsellinic acid, which is then reduced to 5-methyl orsellinic aldehyde by the NRPS-like protein ATEG_03630. 5-methyl orsellinic aldehyde is then first hydroxylated by the FAD-dependent monooxygenase ATEG_03635 and subsequently hydroxylated by the cytochrome P450 monooxygenase ATEG_03631 to produce the unstable polyhydric phenol precursor of azasperpyranones. On the other hand, the polyketide synthase ATEG_07659 is responsible for producing the 3,5-dimethyloctadienone moiety from acetyl-CoA, three malonyl-CoA, and two S-adenosyl methionines (SAM). The 3,5-dimethyloctadienone moiety is then loaded onto the SAT domain of ATEG_07661 and extended with four malonyl-CoA and one SAM, which leads to the formation of 2,4-dihydroxy-6-(5,7-dimethyl-2-oxo-trans-3-trans-5-nonadienyl)-3-methylbenzaldehyde (compound 8) after reductive release and aldol condensation. The FAD-dependent monooxygenase ATEG_07662 is the next enzyme in the biosynthesis sequence and hydroxylates the side chain at the benzylic position of compound 8. In Aspergillus nidulans, afoF, the ortholog of the FAD-dependent oxygenase ATEG_07660, is the key enzyme for the biosynthesis of asperfuranone by catalyzing the hydroxylation at C-8 of to prevent the formation of a six-membered ring hemiacetal intermediate and thus facilitating the formation of a five-membered ring to produce asperfuranone. In Aspergillus terreus, ATEG_07660 is probably not functional, which leads to the formation of the six-membered ring hemiacetal intermediate presperpyranone instead of asperfuranone. Finally, ATEG_03636 is involved in the condensation of the polyhydric phenol moiety produced by cluster A and the perasperpyranone precursor produced by cluster B, to yield azasperpyranone A. Further modifications of azasperpyranone A result in the production of derivatives, including azasperpyranone B to F. In Aspergillus terreus (strain NIH 2624 / FGSC A1156), this protein is Cytochrome P450 monooxygenase ATEG_03631.